The chain runs to 455 residues: Enolase (455 aa).

Residue Gln166 coordinates (2R)-2-phosphoglycerate. The active-site Proton donor is the Glu208. Residues Asp249, Glu311, and Asp338 each coordinate Mg(2+). Lys363, Arg392, Ser393, and Lys414 together coordinate (2R)-2-phosphoglycerate. Residue Lys363 is the Proton acceptor of the active site.

Belongs to the enolase family. Mg(2+) serves as cofactor.

The protein localises to the cytoplasm. It localises to the secreted. The protein resides in the cell surface. It carries out the reaction (2R)-2-phosphoglycerate = phosphoenolpyruvate + H2O. It participates in carbohydrate degradation; glycolysis; pyruvate from D-glyceraldehyde 3-phosphate: step 4/5. In terms of biological role, catalyzes the reversible conversion of 2-phosphoglycerate (2-PG) into phosphoenolpyruvate (PEP). It is essential for the degradation of carbohydrates via glycolysis. In Mycoplasma mobile (strain ATCC 43663 / 163K / NCTC 11711) (Mesomycoplasma mobile), this protein is Enolase.